The following is a 410-amino-acid chain: Testis-specific Y-encoded-like protein 6 (410 aa).

Disordered stretches follow at residues M1–K31 and P46–H69. Phosphoserine is present on S9. A compositionally biased stretch (basic and acidic residues) spans E18–K31.

The protein belongs to the nucleosome assembly protein (NAP) family.

The polypeptide is Testis-specific Y-encoded-like protein 6 (TSPYL6) (Homo sapiens (Human)).